A 1272-amino-acid polypeptide reads, in one-letter code: Fused isobutyryl-CoA mutase (1272 aa).

The B12-binding domain maps to 20–158 (RLRFVTAAAL…ARCAEGARAA (139 aa)). Position 33 (histidine 33) interacts with adenosylcob(III)alamin. The segment at 163–536 (ESQVGAWAAE…YRHVAEALRK (374 aa)) is GTPase chaperone MeaI. Residues 193–240 (GAVARNPSSEASRVAAAGRGDHLDRGVRAASTADTADTANTANTANTA) are disordered. Low complexity predominate over residues 221–240 (AASTADTADTANTANTANTA). A GTP-binding site is contributed by 334–339 (GAGKSS). Residues serine 338, isoleucine 363, aspartate 364, and aspartate 377 each coordinate Mg(2+). GTP is bound at residue arginine 380. 2 residues coordinate Mg(2+): glutamate 429 and threonine 430. 476–479 (NKFD) serves as a coordination point for GTP. Positions 537 to 758 (HGLRSGGGRL…MLDNLPGYFP (222 aa)) are linker. 2 stretches are compositionally biased toward low complexity: residues 614–631 (TVAT…KANA) and 639–663 (ANAS…ATPT). Residues 614–667 (TVATSASPGASASSKANACTSTSSKANASPGANTTANSNASATSGTATPTDALN) are disordered. Residues phenylalanine 766, arginine 801, arginine 907, tyrosine 951, serine 1000, arginine 1035, and lysine 1040 each coordinate substrate. Positions 1152 and 1271 each coordinate GTP.

The protein belongs to the IcmF family. As to quaternary structure, homodimer. It depends on adenosylcob(III)alamin as a cofactor. Mg(2+) is required as a cofactor.

The enzyme catalyses 2-methylpropanoyl-CoA = butanoyl-CoA. It carries out the reaction GTP + H2O = GDP + phosphate + H(+). Catalyzes the reversible interconversion of isobutyryl-CoA and n-butyryl-CoA, using radical chemistry. Also exhibits GTPase activity, associated with its G-protein domain (MeaI) that functions as a chaperone that assists cofactor delivery and proper holo-enzyme assembly. Does not exhibit methylmalonyl-CoA mutase (MCM) activity. This Paraburkholderia xenovorans (strain LB400) protein is Fused isobutyryl-CoA mutase.